The primary structure comprises 285 residues: Urease accessory protein UreD (285 aa).

It belongs to the UreD family. As to quaternary structure, ureD, UreF and UreG form a complex that acts as a GTP-hydrolysis-dependent molecular chaperone, activating the urease apoprotein by helping to assemble the nickel containing metallocenter of UreC. The UreE protein probably delivers the nickel.

The protein resides in the cytoplasm. Required for maturation of urease via the functional incorporation of the urease nickel metallocenter. In Citrobacter koseri (strain ATCC BAA-895 / CDC 4225-83 / SGSC4696), this protein is Urease accessory protein UreD.